Reading from the N-terminus, the 149-residue chain is D-aminoacyl-tRNA deacylase (149 aa).

The short motif at 139 to 140 is the Gly-cisPro motif, important for rejection of L-amino acids element; that stretch reads GP.

It belongs to the DTD family. As to quaternary structure, homodimer.

Its subcellular location is the cytoplasm. It catalyses the reaction glycyl-tRNA(Ala) + H2O = tRNA(Ala) + glycine + H(+). It carries out the reaction a D-aminoacyl-tRNA + H2O = a tRNA + a D-alpha-amino acid + H(+). Functionally, an aminoacyl-tRNA editing enzyme that deacylates mischarged D-aminoacyl-tRNAs. Also deacylates mischarged glycyl-tRNA(Ala), protecting cells against glycine mischarging by AlaRS. Acts via tRNA-based rather than protein-based catalysis; rejects L-amino acids rather than detecting D-amino acids in the active site. By recycling D-aminoacyl-tRNA to D-amino acids and free tRNA molecules, this enzyme counteracts the toxicity associated with the formation of D-aminoacyl-tRNA entities in vivo and helps enforce protein L-homochirality. The protein is D-aminoacyl-tRNA deacylase (DTD1) of Candida glabrata (strain ATCC 2001 / BCRC 20586 / JCM 3761 / NBRC 0622 / NRRL Y-65 / CBS 138) (Yeast).